Here is a 267-residue protein sequence, read N- to C-terminus: Hydroxyethylthiazole kinase (267 aa).

Residue M44 coordinates substrate. ATP-binding residues include K120 and T166. G193 contributes to the substrate binding site.

The protein belongs to the Thz kinase family. It depends on Mg(2+) as a cofactor.

The catalysed reaction is 5-(2-hydroxyethyl)-4-methylthiazole + ATP = 4-methyl-5-(2-phosphooxyethyl)-thiazole + ADP + H(+). It participates in cofactor biosynthesis; thiamine diphosphate biosynthesis; 4-methyl-5-(2-phosphoethyl)-thiazole from 5-(2-hydroxyethyl)-4-methylthiazole: step 1/1. Functionally, catalyzes the phosphorylation of the hydroxyl group of 4-methyl-5-beta-hydroxyethylthiazole (THZ). In Desulfitobacterium hafniense (strain DSM 10664 / DCB-2), this protein is Hydroxyethylthiazole kinase.